Consider the following 216-residue polypeptide: Ribose-5-phosphate isomerase A (216 aa).

Substrate contacts are provided by residues 26 to 29 (TGST), 79 to 82 (DGAD), and 92 to 95 (KGGG). Glu101 functions as the Proton acceptor in the catalytic mechanism. Lys119 is a substrate binding site.

This sequence belongs to the ribose 5-phosphate isomerase family. Homodimer.

It catalyses the reaction aldehydo-D-ribose 5-phosphate = D-ribulose 5-phosphate. It participates in carbohydrate degradation; pentose phosphate pathway; D-ribose 5-phosphate from D-ribulose 5-phosphate (non-oxidative stage): step 1/1. Functionally, catalyzes the reversible conversion of ribose-5-phosphate to ribulose 5-phosphate. The sequence is that of Ribose-5-phosphate isomerase A from Legionella pneumophila (strain Paris).